A 326-amino-acid polypeptide reads, in one-letter code: AA9 family lytic polysaccharide monooxygenase B (326 aa).

A signal peptide spans M1–A19. 2 residues coordinate Cu(2+): H20 and H98. An intrachain disulfide couples C57 to C192. O2 contacts are provided by H178 and Q187. Y189 is a binding site for Cu(2+). Residues P265 to A281 show a composition bias toward low complexity. Positions P265–G286 are disordered. The region spanning C289–L326 is the CBM1 domain.

It belongs to the polysaccharide monooxygenase AA9 family. Cu(2+) is required as a cofactor.

Its subcellular location is the secreted. It catalyses the reaction [(1-&gt;4)-beta-D-glucosyl]n+m + reduced acceptor + O2 = 4-dehydro-beta-D-glucosyl-[(1-&gt;4)-beta-D-glucosyl]n-1 + [(1-&gt;4)-beta-D-glucosyl]m + acceptor + H2O.. Its function is as follows. Lytic polysaccharide monooxygenase (LPMO) that depolymerizes crystalline and amorphous polysaccharides via the oxidation of scissile alpha- or beta-(1-4)-glycosidic bonds, yielding C1 and C4 oxidation products. Catalysis by LPMOs requires the reduction of the active-site copper from Cu(II) to Cu(I) by a reducing agent and H(2)O(2) or O(2) as a cosubstrate. Shows no activity on wheat arabinoxylan, konjac glucomannan, acetylated spruce galactoglucomannan, or cellopentaose. This Thermothielavioides terrestris (strain ATCC 38088 / NRRL 8126) (Thielavia terrestris) protein is AA9 family lytic polysaccharide monooxygenase B.